A 312-amino-acid polypeptide reads, in one-letter code: Glyoxylate/hydroxypyruvate reductase A (312 aa).

The active site involves Arg-227. His-275 acts as the Proton donor in catalysis.

This sequence belongs to the D-isomer specific 2-hydroxyacid dehydrogenase family. GhrA subfamily.

Its subcellular location is the cytoplasm. The catalysed reaction is glycolate + NADP(+) = glyoxylate + NADPH + H(+). It carries out the reaction (R)-glycerate + NAD(+) = 3-hydroxypyruvate + NADH + H(+). It catalyses the reaction (R)-glycerate + NADP(+) = 3-hydroxypyruvate + NADPH + H(+). Catalyzes the NADPH-dependent reduction of glyoxylate and hydroxypyruvate into glycolate and glycerate, respectively. This is Glyoxylate/hydroxypyruvate reductase A from Shigella dysenteriae serotype 1 (strain Sd197).